The following is a 91-amino-acid chain: Long neurotoxin LNTX28 (91 aa).

The N-terminal stretch at 1-21 (MKTLLLTLVVMTIVCLDLGYT) is a signal peptide. 5 cysteine pairs are disulfide-bonded: C24–C41, C34–C62, C47–C51, C66–C77, and C78–C83.

Belongs to the three-finger toxin family. Long-chain subfamily. Type II alpha-neurotoxin sub-subfamily. As to expression, expressed by the venom gland.

It is found in the secreted. Functionally, binds with high affinity to muscular (alpha-1/CHRNA1) and neuronal (alpha-7/CHRNA7) nicotinic acetylcholine receptor (nAChR) and inhibits acetylcholine from binding to the receptor, thereby impairing neuromuscular and neuronal transmission. The sequence is that of Long neurotoxin LNTX28 from Ophiophagus hannah (King cobra).